The sequence spans 221 residues: PKHD-type hydroxylase Pro_1271 (221 aa).

Residues 80-174 (KVHGVMFSKS…RIVCVGWIQS (95 aa)) form the Fe2OG dioxygenase domain. Fe cation-binding residues include His98, Asp100, and His155. Arg165 contributes to the 2-oxoglutarate binding site.

The cofactor is Fe(2+). L-ascorbate is required as a cofactor.

This chain is PKHD-type hydroxylase Pro_1271, found in Prochlorococcus marinus (strain SARG / CCMP1375 / SS120).